A 499-amino-acid polypeptide reads, in one-letter code: Ubiquitin carboxyl-terminal hydrolase 16 (499 aa).

The USP domain maps to 53–497 (VGLINRGNDC…YAYMLYYERV (445 aa)). Cysteine 62 acts as the Nucleophile in catalysis. Histidine 407 (proton acceptor) is an active-site residue.

The protein belongs to the peptidase C19 family.

The enzyme catalyses Thiol-dependent hydrolysis of ester, thioester, amide, peptide and isopeptide bonds formed by the C-terminal Gly of ubiquitin (a 76-residue protein attached to proteins as an intracellular targeting signal).. This is Ubiquitin carboxyl-terminal hydrolase 16 (UBP16) from Saccharomyces cerevisiae (strain ATCC 204508 / S288c) (Baker's yeast).